The sequence spans 608 residues: Chaperone protein HtpG (608 aa).

Positions 1–332 (MQFQTEVNQL…VEDLPLNVSR (332 aa)) are a; substrate-binding. The interval 333-536 (EILQENQILK…KNKPDFAMQQ (204 aa)) is b. The interval 537–608 (LLKQMGQEQN…LTKIINKAFS (72 aa)) is c.

The protein belongs to the heat shock protein 90 family. As to quaternary structure, homodimer.

The protein resides in the cytoplasm. Functionally, molecular chaperone. Has ATPase activity. This Campylobacter jejuni subsp. jejuni serotype O:6 (strain 81116 / NCTC 11828) protein is Chaperone protein HtpG.